Here is a 258-residue protein sequence, read N- to C-terminus: UBX domain-containing protein 2A (258 aa).

Basic and acidic residues predominate over residues 1–14; that stretch reads MKEVDNLDSIKEEW. The interval 1–30 is disordered; that stretch reads MKEVDNLDSIKEEWACETGPPDSQPLNDNQ. The tract at residues 1–152 is required for interaction with CHRNA3; that stretch reads MKEVDNLDSI…SATPRIVSKA (152 aa). A required for inhibition of CHRNA3 ubiquitination and translocation of CHRNA3 to the plasma membrane resulting in an increase in acetylcholine-gated nicotinic acetylcholine receptor currents region spans residues 1–165; sequence MKEVDNLDSI…EVDNKSTLSA (165 aa). Positions 61 to 125 constitute an SEP domain; it reads QVDVNIKLWK…VEDKKNEVCM (65 aa). The tract at residues 168 to 258 is required for interaction with VCP; the sequence is LNNLEPITRI…QKTAEPFRKL (91 aa). The 78-residue stretch at 170-247 folds into the UBX domain; it reads NLEPITRIQI…DLKNAVIIQR (78 aa).

Part of a complex composed of STUB1/CHIP, VCP/p97, CHRNA3, and UBXN2A that modulates the ubiquitination and endoplasmic reticulum-associated degradation (ERAD) of CHRNA3. Within the complex UBXN2A acts as a scaffold protein required for the interaction of CHRNA3 with VCP/p97, this interaction also inhibits CHRNA3 ubiquitination by STUB1/CHIP and subsequently ERAD. Interacts (via SEP domain) with CHRNA3 and interacts (via UBX domain) with VCP/P97; these interactions are required for the interaction of CHRNA3 with the STUB1-VCP-UBXN2A complex. Interacts with HSPA9/MOT-2 (via SBD domain); the interaction inhibits HSPA9/MOT-2 interaction with and degradation of p53, thereby promotes p53 translocation to the nucleus. Interacts with RICTOR. Post-translationally, ubiquitinated. Expressed in the prefrontal cortex (at protein level). Expressed in the habenula and hippocampus (at protein level). Expressed in peripheral ganglia.

It localises to the golgi apparatus. The protein localises to the endoplasmic reticulum. It is found in the perikaryon. Its subcellular location is the cell projection. The protein resides in the dendrite. It localises to the nucleus. The protein localises to the cytoplasm. Functionally, acts to repress the ubiquitination and subsequent endoplasmic reticulum-associated degradation of CHRNA3 by the STUB1-VCP-UBXN2A complex in cortical neurons. Also acts to promote the translocation of CHRNA3 to the plasma membrane and subsequently increases plasma membrane acetylcholine-gated ion-channel activation. Plays a role in the inhibition of STUB1-mediated TP53 degradation, via its interaction with HSPA9 which acts to inhibit TP53 binding to HSPA9. Positively mediates the ubiquitination and proteosomal degradation of RICTOR, may thereby act as a negative regulator of the mTORC2 pathway. The polypeptide is UBX domain-containing protein 2A (Mus musculus (Mouse)).